The following is a 369-amino-acid chain: Phenylalanine--tRNA ligase alpha subunit (369 aa).

Residue Glu269 coordinates Mg(2+).

This sequence belongs to the class-II aminoacyl-tRNA synthetase family. Phe-tRNA synthetase alpha subunit type 1 subfamily. In terms of assembly, tetramer of two alpha and two beta subunits. Mg(2+) is required as a cofactor.

The protein resides in the cytoplasm. The enzyme catalyses tRNA(Phe) + L-phenylalanine + ATP = L-phenylalanyl-tRNA(Phe) + AMP + diphosphate + H(+). The chain is Phenylalanine--tRNA ligase alpha subunit from Nitrobacter winogradskyi (strain ATCC 25391 / DSM 10237 / CIP 104748 / NCIMB 11846 / Nb-255).